The chain runs to 327 residues: Small ribosomal subunit protein uS2 (327 aa).

The segment at 258-327 (AGHTPVSETL…PGVADGAALE (70 aa)) is disordered.

The protein belongs to the universal ribosomal protein uS2 family.

The sequence is that of Small ribosomal subunit protein uS2 from Anaplasma marginale (strain St. Maries).